The primary structure comprises 481 residues: Aspartyl/glutamyl-tRNA(Asn/Gln) amidotransferase subunit B (481 aa).

It belongs to the GatB/GatE family. GatB subfamily. Heterotrimer of A, B and C subunits.

It carries out the reaction L-glutamyl-tRNA(Gln) + L-glutamine + ATP + H2O = L-glutaminyl-tRNA(Gln) + L-glutamate + ADP + phosphate + H(+). The catalysed reaction is L-aspartyl-tRNA(Asn) + L-glutamine + ATP + H2O = L-asparaginyl-tRNA(Asn) + L-glutamate + ADP + phosphate + 2 H(+). Allows the formation of correctly charged Asn-tRNA(Asn) or Gln-tRNA(Gln) through the transamidation of misacylated Asp-tRNA(Asn) or Glu-tRNA(Gln) in organisms which lack either or both of asparaginyl-tRNA or glutaminyl-tRNA synthetases. The reaction takes place in the presence of glutamine and ATP through an activated phospho-Asp-tRNA(Asn) or phospho-Glu-tRNA(Gln). This chain is Aspartyl/glutamyl-tRNA(Asn/Gln) amidotransferase subunit B, found in Pseudomonas putida (strain ATCC 47054 / DSM 6125 / CFBP 8728 / NCIMB 11950 / KT2440).